A 332-amino-acid polypeptide reads, in one-letter code: Ribosomal RNA small subunit methyltransferase H (332 aa).

S-adenosyl-L-methionine-binding positions include 39-41 (GGY), Asp-56, Phe-83, Asp-100, and Gln-107.

The protein belongs to the methyltransferase superfamily. RsmH family.

The protein resides in the cytoplasm. The catalysed reaction is cytidine(1402) in 16S rRNA + S-adenosyl-L-methionine = N(4)-methylcytidine(1402) in 16S rRNA + S-adenosyl-L-homocysteine + H(+). Specifically methylates the N4 position of cytidine in position 1402 (C1402) of 16S rRNA. The chain is Ribosomal RNA small subunit methyltransferase H from Bartonella quintana (strain Toulouse) (Rochalimaea quintana).